The following is a 526-amino-acid chain: CTP synthase (526 aa).

Residues 1–270 (MKYIFVTGGV…ADVLSTHLGL (270 aa)) are amidoligase domain. Residue serine 12 coordinates CTP. Serine 12 contributes to the UTP binding site. Residues 13-18 (GLGKGI) and aspartate 70 contribute to the ATP site. Aspartate 70 and glutamate 145 together coordinate Mg(2+). CTP contacts are provided by residues 152 to 154 (DIE), 191 to 196 (KTKPTQ), and lysine 227. UTP contacts are provided by residues 191-196 (KTKPTQ) and lysine 227. In terms of domain architecture, Glutamine amidotransferase type-1 spans 293–525 (VAIVSKYGIE…VEACRANKRT (233 aa)). An L-glutamine-binding site is contributed by glycine 349. Catalysis depends on cysteine 376, which acts as the Nucleophile; for glutamine hydrolysis. L-glutamine contacts are provided by residues 377–380 (LGFQ), glutamate 400, and arginine 455. Active-site residues include histidine 498 and glutamate 500.

This sequence belongs to the CTP synthase family. Homotetramer.

The enzyme catalyses UTP + L-glutamine + ATP + H2O = CTP + L-glutamate + ADP + phosphate + 2 H(+). It catalyses the reaction L-glutamine + H2O = L-glutamate + NH4(+). It carries out the reaction UTP + NH4(+) + ATP = CTP + ADP + phosphate + 2 H(+). It participates in pyrimidine metabolism; CTP biosynthesis via de novo pathway; CTP from UDP: step 2/2. With respect to regulation, allosterically activated by GTP, when glutamine is the substrate; GTP has no effect on the reaction when ammonia is the substrate. The allosteric effector GTP functions by stabilizing the protein conformation that binds the tetrahedral intermediate(s) formed during glutamine hydrolysis. Inhibited by the product CTP, via allosteric rather than competitive inhibition. Catalyzes the ATP-dependent amination of UTP to CTP with either L-glutamine or ammonia as the source of nitrogen. Regulates intracellular CTP levels through interactions with the four ribonucleotide triphosphates. The chain is CTP synthase from Methanoregula boonei (strain DSM 21154 / JCM 14090 / 6A8).